Reading from the N-terminus, the 581-residue chain is Adenine deaminase (581 aa).

This sequence belongs to the metallo-dependent hydrolases superfamily. Adenine deaminase family. Mn(2+) serves as cofactor.

It catalyses the reaction adenine + H2O + H(+) = hypoxanthine + NH4(+). The protein is Adenine deaminase of Lysinibacillus sphaericus (strain C3-41).